The following is a 238-amino-acid chain: Nucleoside diphosphate kinase III, chloroplastic/mitochondrial (238 aa).

The transit peptide at 1-85 (MSSQICRSAS…YMIQDQEVLA (85 aa)) directs the protein to the chloroplast and mitochondrion. 6 residues coordinate ATP: K96, F144, R172, T178, R189, and N199. The Pros-phosphohistidine intermediate role is filled by H202.

Belongs to the NDK family. Homohexamer. Requires Mg(2+) as cofactor.

The protein localises to the plastid. It localises to the chloroplast thylakoid lumen. It is found in the mitochondrion intermembrane space. It catalyses the reaction a 2'-deoxyribonucleoside 5'-diphosphate + ATP = a 2'-deoxyribonucleoside 5'-triphosphate + ADP. The enzyme catalyses a ribonucleoside 5'-diphosphate + ATP = a ribonucleoside 5'-triphosphate + ADP. Major role in the synthesis of nucleoside triphosphates other than ATP. The ATP gamma phosphate is transferred to the NDP beta phosphate via a ping-pong mechanism, using a phosphorylated active-site intermediate. Shows the highest specificity towards GDP. This chain is Nucleoside diphosphate kinase III, chloroplastic/mitochondrial (NDPK3), found in Arabidopsis thaliana (Mouse-ear cress).